The chain runs to 69 residues: Beta-defensin 114 (69 aa).

Positions Met1 to Ala26 are cleaved as a signal peptide. 3 cysteine pairs are disulfide-bonded: Cys29/Cys57, Cys36/Cys50, and Cys40/Cys58.

Belongs to the beta-defensin family. As to expression, expressed in epididymis, predominantly in the caput (at protein level).

It is found in the secreted. Its function is as follows. Has a salt-sensitive antimicrobial activity against Gram-negative bacteria, including E.coli, Gram-positive, including S.aureus, and fungi, including C.albicans. Binds to and neutralizes bacterial lipopolysaccharides (LPS), abolishing TNF production by macrophages challenged with LPS. Rescues the LPS-induced reduction of sperm motility in vitro and may protect from LPS-induced lethality. In Homo sapiens (Human), this protein is Beta-defensin 114 (DEFB114).